Consider the following 1116-residue polypeptide: Eukaryotic translation initiation factor 2-alpha kinase 3 (1116 aa).

The first 29 residues, Met-1–Ala-29, serve as a signal peptide directing secretion. Residues Ala-30–Asp-514 are Lumenal-facing. The disordered stretch occupies residues Ala-77–Arg-101. N-linked (GlcNAc...) asparagine glycosylation occurs at Asn-258. A helical transmembrane segment spans residues Pro-515 to Ala-535. Residues Thr-536–Asn-1116 lie on the Cytoplasmic side of the membrane. The tract at residues Arg-550–Glu-571 is disordered. Residues Phe-593–Phe-1077 form the Protein kinase domain. Leu-599–Val-607 contacts ATP. A Phosphotyrosine; by autocatalysis modification is found at Tyr-619. Lys-622 contributes to the ATP binding site. The tract at residues Glu-647 to Met-888 is insert loop. Ser-715 bears the Phosphoserine mark. At Thr-802 the chain carries Phosphothreonine. Residues Lys-841–Leu-863 form a disordered region. The span at Ser-844–Ser-856 shows a compositional bias: low complexity. Catalysis depends on Asp-937, which acts as the Proton acceptor. Phosphothreonine is present on Thr-982. The interval Gln-1090–Asn-1116 is disordered. Position 1094 is a phosphoserine (Ser-1094). Polar residues predominate over residues Gln-1105–Asn-1116.

Belongs to the protein kinase superfamily. Ser/Thr protein kinase family. GCN2 subfamily. In terms of assembly, forms dimers with HSPA5/BIP in resting cells. Homotetramerizes in response to endoplasmic reticulum (ER) stress, leading to its activation. Interacts with HSP90B1/GRP94. Interacts with DNAJC3; inhibiting EIF2AK3/PERK activity. Interacts with ATAD3A; ATAD3A and EIF2S1/eIF-2-alpha occupy a common binding site within the cytoplasmic loop of EIF2AK3/PERK, leading to prevent EIF2AK3/PERK association with its substrate EIF2S1/eIF-2-alpha. Interacts with MFN2. Interacts with TMEM33. Interacts with PDIA6. Interacts with LACC1. Oligomerization of the N-terminal ER luminal domain by ER stress promotes EIF2AK3/PERK trans-autophosphorylation of the C-terminal cytoplasmic kinase domain at multiple residues including Thr-982 on the kinase activation loop. Autophosphorylated at Tyr-619 following endoplasmic reticulum stress, leading to activate its activity. Dephosphorylated at Tyr-619 by PTPN1/PTP1B, leading to inactivate its enzyme activity. Phosphorylation at Thr-802 by AKT (AKT1, AKT2 and/or AKT3) inactivates EIF2AK3/PERK. In terms of processing, ADP-ribosylated by PARP16 upon ER stress, which increases kinase activity. Ubiquitous. A high level expression is seen in secretory tissues.

The protein localises to the endoplasmic reticulum membrane. The enzyme catalyses L-seryl-[protein] + ATP = O-phospho-L-seryl-[protein] + ADP + H(+). The catalysed reaction is L-threonyl-[protein] + ATP = O-phospho-L-threonyl-[protein] + ADP + H(+). It catalyses the reaction L-tyrosyl-[protein] + ATP = O-phospho-L-tyrosyl-[protein] + ADP + H(+). Inhibited by HSPA5/BIP in absence of stress. Perturbation in protein folding in the endoplasmic reticulum (ER) promotes reversible dissociation from HSPA5/BIP and oligomerization, resulting in trans-autophosphorylation and kinase activity induction. Inactivated following phosphorylation at Thr-802 by AKT (AKT1, AKT2 and/or AKT3). Inhibited by ATAD3A at mitochondria-endoplasmic reticulum contact sites, providing a safe haven for mitochondrial protein translation during ER stress. Metabolic-stress sensing protein kinase that phosphorylates the alpha subunit of eukaryotic translation initiation factor 2 (EIF2S1/eIF-2-alpha) in response to various stress, such as unfolded protein response (UPR). Key effector of the integrated stress response (ISR) to unfolded proteins: EIF2AK3/PERK specifically recognizes and binds misfolded proteins, leading to its activation and EIF2S1/eIF-2-alpha phosphorylation. EIF2S1/eIF-2-alpha phosphorylation in response to stress converts EIF2S1/eIF-2-alpha in a global protein synthesis inhibitor, leading to a global attenuation of cap-dependent translation, while concomitantly initiating the preferential translation of ISR-specific mRNAs, such as the transcriptional activators ATF4 and QRICH1, and hence allowing ATF4- and QRICH1-mediated reprogramming. The EIF2AK3/PERK-mediated unfolded protein response increases mitochondrial oxidative phosphorylation by promoting ATF4-mediated expression of COX7A2L/SCAF1, thereby increasing formation of respiratory chain supercomplexes. In contrast to most subcellular compartments, mitochondria are protected from the EIF2AK3/PERK-mediated unfolded protein response due to EIF2AK3/PERK inhibition by ATAD3A at mitochondria-endoplasmic reticulum contact sites. In addition to EIF2S1/eIF-2-alpha, also phosphorylates NFE2L2/NRF2 in response to stress, promoting release of NFE2L2/NRF2 from the BCR(KEAP1) complex, leading to nuclear accumulation and activation of NFE2L2/NRF2. Serves as a critical effector of unfolded protein response (UPR)-induced G1 growth arrest due to the loss of cyclin-D1 (CCND1). Involved in control of mitochondrial morphology and function. This Homo sapiens (Human) protein is Eukaryotic translation initiation factor 2-alpha kinase 3.